Reading from the N-terminus, the 124-residue chain is Small ribosomal subunit protein uS13 (124 aa).

A disordered region spans residues 94-124; the sequence is RGMPVRGQRTKTNARTRKGPKRTIAGKKKAR.

The protein belongs to the universal ribosomal protein uS13 family. As to quaternary structure, part of the 30S ribosomal subunit. Forms a loose heterodimer with protein S19. Forms two bridges to the 50S subunit in the 70S ribosome.

Functionally, located at the top of the head of the 30S subunit, it contacts several helices of the 16S rRNA. In the 70S ribosome it contacts the 23S rRNA (bridge B1a) and protein L5 of the 50S subunit (bridge B1b), connecting the 2 subunits; these bridges are implicated in subunit movement. Contacts the tRNAs in the A and P-sites. The polypeptide is Small ribosomal subunit protein uS13 (Mycobacterium tuberculosis (strain ATCC 25177 / H37Ra)).